The sequence spans 209 residues: Protein-L-isoaspartate O-methyltransferase (209 aa).

S55 is a catalytic residue.

The protein belongs to the methyltransferase superfamily. L-isoaspartyl/D-aspartyl protein methyltransferase family.

It is found in the cytoplasm. The catalysed reaction is [protein]-L-isoaspartate + S-adenosyl-L-methionine = [protein]-L-isoaspartate alpha-methyl ester + S-adenosyl-L-homocysteine. Its function is as follows. Catalyzes the methyl esterification of L-isoaspartyl residues in peptides and proteins that result from spontaneous decomposition of normal L-aspartyl and L-asparaginyl residues. It plays a role in the repair and/or degradation of damaged proteins. The polypeptide is Protein-L-isoaspartate O-methyltransferase (Anaeromyxobacter dehalogenans (strain 2CP-1 / ATCC BAA-258)).